We begin with the raw amino-acid sequence, 267 residues long: Triosephosphate isomerase (267 aa).

Asn12 to Lys14 contacts substrate. His104 acts as the Electrophile in catalysis. Glu176 functions as the Proton acceptor in the catalytic mechanism. Substrate contacts are provided by residues Gly182, Ser222, and Gly243 to Gly244.

The protein belongs to the triosephosphate isomerase family. In terms of assembly, homodimer.

Its subcellular location is the cytoplasm. The catalysed reaction is D-glyceraldehyde 3-phosphate = dihydroxyacetone phosphate. The protein operates within carbohydrate biosynthesis; gluconeogenesis. Its pathway is carbohydrate degradation; glycolysis; D-glyceraldehyde 3-phosphate from glycerone phosphate: step 1/1. Its function is as follows. Involved in the gluconeogenesis. Catalyzes stereospecifically the conversion of dihydroxyacetone phosphate (DHAP) to D-glyceraldehyde-3-phosphate (G3P). The sequence is that of Triosephosphate isomerase from Bifidobacterium longum (strain DJO10A).